The sequence spans 205 residues: Ribosomal RNA small subunit methyltransferase G (205 aa).

Residues G73, L78, 124–125 (VE), and R138 contribute to the S-adenosyl-L-methionine site.

The protein belongs to the methyltransferase superfamily. RNA methyltransferase RsmG family.

Its subcellular location is the cytoplasm. The catalysed reaction is guanosine(527) in 16S rRNA + S-adenosyl-L-methionine = N(7)-methylguanosine(527) in 16S rRNA + S-adenosyl-L-homocysteine. Functionally, specifically methylates the N7 position of guanine in position 527 of 16S rRNA. The polypeptide is Ribosomal RNA small subunit methyltransferase G (Actinobacillus pleuropneumoniae serotype 5b (strain L20)).